Reading from the N-terminus, the 553-residue chain is Putative transport protein YidE (553 aa).

5 consecutive transmembrane segments (helical) span residues 4-24 (IALTVSILALVAVVGLFIGNV), 28-48 (GVGLGIGGVLFGGIIVGHFVS), 65-85 (FGLILFVYTIGIQVGPGFFAS), 95-115 (LFAVLIVIIGGLVTAILHKLF), and 158-178 (MSYAMAYPFGICGILFTMWML). 2 consecutive RCK C-terminal domains span residues 191–276 (QQHE…VIGQ) and 279–361 (DTSL…VLGN). Transmembrane regions (helical) follow at residues 371 to 391 (MLPVFIGIGLGVLLGSIPVFV), 393 to 413 (GFPAALKLGLAGGPLIMALIL), 439 to 459 (IVLFLSVVGLKSGGDFIHTLV), 464 to 484 (LSWIGYGALITAVPLITVGIL), 493 to 513 (YLTMCGMLAGSMTDPPALAFA), and 533 to 553 (LVMFLRIITPQLLAVLFWSIG).

Belongs to the AAE transporter (TC 2.A.81) family. YidE subfamily.

Its subcellular location is the cell membrane. The polypeptide is Putative transport protein YidE (Escherichia coli O6:K15:H31 (strain 536 / UPEC)).